We begin with the raw amino-acid sequence, 215 residues long: Probable cutinase 3 (215 aa).

The first 17 residues, Met-1–Ala-17, serve as a signal peptide directing secretion. Disulfide bonds link Cys-39–Cys-118 and Cys-65–Cys-79. Ser-129 (nucleophile) is an active-site residue. Cys-180 and Cys-187 are oxidised to a cystine. Residue Asp-184 is part of the active site. The active-site Proton donor/acceptor is His-197.

Belongs to the cutinase family.

It is found in the secreted. The catalysed reaction is cutin + H2O = cutin monomers.. Functionally, catalyzes the hydrolysis of complex carboxylic polyesters found in the cell wall of plants. Degrades cutin, a macromolecule that forms the structure of the plant cuticle. The polypeptide is Probable cutinase 3 (Aspergillus clavatus (strain ATCC 1007 / CBS 513.65 / DSM 816 / NCTC 3887 / NRRL 1 / QM 1276 / 107)).